Consider the following 296-residue polypeptide: NAD kinase (296 aa).

The active-site Proton acceptor is the D73. NAD(+) is bound by residues 73–74 (DG), K78, 151–152 (NE), R178, D180, and 191–196 (TAHAMS).

The protein belongs to the NAD kinase family. A divalent metal cation is required as a cofactor.

It localises to the cytoplasm. It carries out the reaction NAD(+) + ATP = ADP + NADP(+) + H(+). Functionally, involved in the regulation of the intracellular balance of NAD and NADP, and is a key enzyme in the biosynthesis of NADP. Catalyzes specifically the phosphorylation on 2'-hydroxyl of the adenosine moiety of NAD to yield NADP. The protein is NAD kinase of Francisella tularensis subsp. novicida (strain U112).